A 919-amino-acid polypeptide reads, in one-letter code: Synphilin-1 (919 aa).

Disordered stretches follow at residues 80-99 (SPLKHQPETLENNESDDQKN), 108-140 (GGESDLGPQPQELGPGDGVGGPPGKSSEPSTSL), and 287-313 (SSAAESKPEEQVSGLNRTSSQGPEERS). The segment covering 299 to 308 (SGLNRTSSQG) has biased composition (polar residues). 4 ANK repeats span residues 349–380 (NGNNLLHIAASQGHAECLQHLTSLMGEDCLNE), 384–413 (EKLTPAGLAIKNGQLECVRWMVSETEAIAE), 419–448 (DFPSLIHYAGCYGQEKILLWLLQFMQEQGI), and 456–485 (DGNSAVHVASQHGYLGCIQTLVEYGANVTM). A coiled-coil region spans residues 515–552 (CMSLASQVVKLTKQLKEQTVERVTLQNQLQQFLEAQKS). 3 disordered regions span residues 549 to 615 (AQKS…KDED), 666 to 713 (RLRQ…SMDS), and 728 to 919 (SGGR…NKAA). Positions 555-571 (KSLPSSPSSPSSPASRK) are enriched in low complexity. Residues 603–632 (ASSRARPKAKDEDSDKILRQLLGKEISENV) form an ANK 5 repeat. A compositionally biased stretch (low complexity) spans 667-685 (LRQLMQRSLSESDTDSNNS). Basic and acidic residues predominate over residues 686–700 (EDPKTTPVRKADRPR). The ANK 6 repeat unit spans residues 699–729 (PRPQPIVESVESMDSAESLHLMIKKHTLASG). The segment covering 774–785 (PSGDPQQPSPDS) has biased composition (low complexity). Over residues 833-842 (NGEKDKDKGR) the composition is skewed to basic and acidic residues. Over residues 844 to 854 (LQRTSTSNESG) the composition is skewed to polar residues. Low complexity predominate over residues 874–886 (NQNNNNNYQAANQ).

Homodimer. Heterodimer of isoform 1 and isoform 2. Interacts with SIAH1, SIAH2, SNCA, RNF19A and PRKN. Isoform 2 has a strong tendency to form aggregates and can sequester isoform 1. Ubiquitinated; mediated by SIAH1, SIAH2 or RNF19A and leading to its subsequent proteasomal degradation. In the absence of proteasomal degradation, ubiquitinated SNCAIP accumulates in cytoplasmic inclusion bodies. Isoform 2 is subject to limited ubiquitination that does not lead to proteasomal degradation. Detected in brain (at protein level). Widely expressed, with highest levels in brain, heart and placenta.

The protein localises to the cytoplasm. Functionally, isoform 2 inhibits the ubiquitin ligase activity of SIAH1 and inhibits proteasomal degradation of target proteins. Isoform 2 inhibits autoubiquitination and proteasomal degradation of SIAH1, and thereby increases cellular levels of SIAH. Isoform 2 modulates SNCA monoubiquitination by SIAH1. This is Synphilin-1 (SNCAIP) from Homo sapiens (Human).